Consider the following 189-residue polypeptide: Probable nicotinate-nucleotide adenylyltransferase (189 aa).

Belongs to the NadD family.

The enzyme catalyses nicotinate beta-D-ribonucleotide + ATP + H(+) = deamido-NAD(+) + diphosphate. It functions in the pathway cofactor biosynthesis; NAD(+) biosynthesis; deamido-NAD(+) from nicotinate D-ribonucleotide: step 1/1. Functionally, catalyzes the reversible adenylation of nicotinate mononucleotide (NaMN) to nicotinic acid adenine dinucleotide (NaAD). This chain is Probable nicotinate-nucleotide adenylyltransferase, found in Bacillus pumilus (strain SAFR-032).